Consider the following 342-residue polypeptide: UDP-3-O-acylglucosamine N-acyltransferase (342 aa).

His-243 acts as the Proton acceptor in catalysis.

The protein belongs to the transferase hexapeptide repeat family. LpxD subfamily. In terms of assembly, homotrimer.

It catalyses the reaction a UDP-3-O-[(3R)-3-hydroxyacyl]-alpha-D-glucosamine + a (3R)-hydroxyacyl-[ACP] = a UDP-2-N,3-O-bis[(3R)-3-hydroxyacyl]-alpha-D-glucosamine + holo-[ACP] + H(+). Its pathway is bacterial outer membrane biogenesis; LPS lipid A biosynthesis. Functionally, catalyzes the N-acylation of UDP-3-O-acylglucosamine using 3-hydroxyacyl-ACP as the acyl donor. Is involved in the biosynthesis of lipid A, a phosphorylated glycolipid that anchors the lipopolysaccharide to the outer membrane of the cell. This is UDP-3-O-acylglucosamine N-acyltransferase from Coxiella burnetii (strain CbuK_Q154) (Coxiella burnetii (strain Q154)).